We begin with the raw amino-acid sequence, 77 residues long: MLKKVVAAAAATGGLVLAGAGMAVADSGAQGAAVHSPGVLSGNVVQVPVHVPVNVCGNTISVIGLLNPAFGNVCINK.

The signal sequence occupies residues methionine 1–alanine 25. The region spanning serine 36–asparagine 76 is the Chaplin domain. Forms amyloid fibrils in vitro stretches follow at residues glycine 38–asparagine 54 and glycine 57–asparagine 72. Cysteine 56 and cysteine 74 are disulfide-bonded.

The protein belongs to the chaplin family. Short chaplin subfamily. As to quaternary structure, homodimer; disulfide linked. About 10% of ChpH isolated from cell wall forms disulfide-bonded homodimers.

It is found in the cell surface. Its subcellular location is the secreted. The protein localises to the cell wall. The protein resides in the fimbrium. In terms of biological role, one of 8 partially redundant surface-active proteins required for efficient formation of aerial mycelium; the short chaplins assemble into a hydrophobic, amyloidal fibrillar surface layer that envelopes and protects aerial hyphae and spores, presumably anchored to the long chaplins. Chaplins have an overlapping function with the surface-active SapB peptide; chaplins are essential on minimal medium while on rich medium both chaplins and SapB are required for efficient aerial hyphae formation. Chaplins are also involved in cell attachment to a hydrophobic surface. Forms amyloid fibrils in vitro probably composed of stacked beta-sheets. A small chaplin extract (ChpD, ChpE, ChpF, ChpG and ChpH) self-assembles into 2 different amyloids; small fibrils at the air-water interface form an amphipathic membrane that resembles spore-surface structures involved in aerial hyphae formation, and hydrophilic fibrils in solution that resemble the fibers that attach cells to a hydrophobic surface. At the air-water interface the hydrophilic surface is in contact with water (probably equivalent to the peptidoglycan layer), while the hydrophobic face is exposed to the air, making the surface of the aerial hyphae hydrophobic. A minimal chaplin strain capable of forming aerial mycelium/hyphae on minimal medium contains ChpC, ChpE and ChpH. The strain also has restored rodlet formation on the hyphae surface. A small chaplin extract applied to a chaplin-deficient strain restores aerial hyphae formation. The small chaplin extract forms an amyloid-like structure similar to that seen on the surface of cells without rodlets (rdlA-rdlB deletions), and is highly surface active, reducing surface tension from 72 to 26 mJ/m(2), which probably allows escape of hyphae from an aqueous environment into air. The chain is Chaplin-H from Streptomyces coelicolor (strain ATCC BAA-471 / A3(2) / M145).